A 203-amino-acid chain; its full sequence is Glycerol-3-phosphate acyltransferase (203 aa).

6 consecutive transmembrane segments (helical) span residues 5 to 25, 58 to 78, 87 to 107, 118 to 138, 150 to 170, and 176 to 196; these read IIYLLAYLIGAIPFGLLLAQI, TLAVATVILDALKGVLPILMA, ILWTMAVLAVFGHCFSPYLKF, GVLAVFLPFEIICALLAWFII, LGAMIVLIATSFIFHYDIPVI, and IFIIAFIVVYKHIPNILRLIG.

This sequence belongs to the PlsY family. As to quaternary structure, probably interacts with PlsX.

Its subcellular location is the cell inner membrane. It catalyses the reaction an acyl phosphate + sn-glycerol 3-phosphate = a 1-acyl-sn-glycero-3-phosphate + phosphate. It participates in lipid metabolism; phospholipid metabolism. Functionally, catalyzes the transfer of an acyl group from acyl-phosphate (acyl-PO(4)) to glycerol-3-phosphate (G3P) to form lysophosphatidic acid (LPA). This enzyme utilizes acyl-phosphate as fatty acyl donor, but not acyl-CoA or acyl-ACP. This is Glycerol-3-phosphate acyltransferase from Campylobacter lari (strain RM2100 / D67 / ATCC BAA-1060).